The sequence spans 583 residues: Immunity-related GTPase family Q protein (583 aa).

Cysteines 152 and 158 form a disulfide. Residues 155-179 (SDRCEELERLQVVLRTQAEALQRLL) adopt a coiled-coil conformation. The LIR 1 signature appears at 186–189 (FEVL). Threonine 203 bears the Phosphothreonine mark. The IRG-type G domain maps to 223-409 (ARLDLAVAGT…PGLGTWLQHA (187 aa)). Residues 322–373 (APLVGVRTDGQGEDPPEVLEEEKAQNASDGNSGDARSEGKKAGIGDSGCTAA) form a disordered region. A compositionally biased stretch (acidic residues) spans 332-341 (QGEDPPEVLE). An LIR 2 motif is present at residues 381-384 (WEVL).

It belongs to the TRAFAC class dynamin-like GTPase superfamily. IRG family. In terms of assembly, interacts (via LIR motif 1) with GABARAPL2. Interacts (via LIR motif 2) with MAP1LC3B/LC3B.

It is found in the lysosome. The protein resides in the cytoplasmic vesicle. It localises to the autophagosome. Its function is as follows. Autophagy receptor that specifically promotes clearance of misfolded MHC class I molecules by targeting them to the lysosome for degradation. Acts as a molecular adapter that specifically recognizes and binds (1) misfolded MHC class I molecules following their ubiquitination, as well as (2) autophagy-related proteins, promoting the recruitment of misfolded MHC class I molecules to autophagy machinery for degradation. Degradation of misfolded MHC class I molecules is essential to prevent accumulation of defective MHC class I complexes at the surface of CD8(+) T-cells and prevent a stronger T-cell-mediated response. In contrast to other members of the family, does not show GTPase activity. The chain is Immunity-related GTPase family Q protein (Irgq) from Mus musculus (Mouse).